The chain runs to 174 residues: MNYFDLFNVVPAFDIDTALLAERYRELQRAVHPDKFANDTEQQKLLSVQRTAQVNDGYQTLKNPLRRAEHMLSLRGIELSHETTTLKDGAFLMQQMEWREALEDIQHNSDPQSSIDELYESFGEFESTLLTKLATLLISDESADALLAADQIRKLKFMAKLHDELARIEDGLLD.

The J domain occupies 2–74 (NYFDLFNVVP…LRRAEHMLSL (73 aa)).

It belongs to the HscB family. Interacts with HscA and stimulates its ATPase activity.

In terms of biological role, co-chaperone involved in the maturation of iron-sulfur cluster-containing proteins. Seems to help targeting proteins to be folded toward HscA. The chain is Co-chaperone protein HscB homolog from Shewanella frigidimarina (strain NCIMB 400).